The chain runs to 154 residues: Transcriptional repressor NrdR (154 aa).

A zinc finger lies at 3–34 (CPFCGAEDTAVADTRLNDEADVVRRRRKCNAC). Positions 49 to 139 (PQVVKKNGLR…VYRNFEDVDA (91 aa)) constitute an ATP-cone domain.

It belongs to the NrdR family. Zn(2+) serves as cofactor.

Functionally, negatively regulates transcription of bacterial ribonucleotide reductase nrd genes and operons by binding to NrdR-boxes. This is Transcriptional repressor NrdR from Dechloromonas aromatica (strain RCB).